The primary structure comprises 253 residues: uncharacterized protein (253 aa).

The BPL/LPL catalytic domain maps to 30-236 (AQGRQVAQLW…AVDDDAALMA (207 aa)).

This is an uncharacterized protein from Cupriavidus necator (strain ATCC 17699 / DSM 428 / KCTC 22496 / NCIMB 10442 / H16 / Stanier 337) (Ralstonia eutropha).